The chain runs to 151 residues: FAD synthase (151 aa).

ATP is bound by residues threonine 12–phenylalanine 13, histidine 17–histidine 20, aspartate 97, and tyrosine 125.

It belongs to the archaeal FAD synthase family. As to quaternary structure, homodimer. Requires a divalent metal cation as cofactor.

It carries out the reaction FMN + ATP + H(+) = FAD + diphosphate. Its pathway is cofactor biosynthesis; FAD biosynthesis; FAD from FMN: step 1/1. Functionally, catalyzes the transfer of the AMP portion of ATP to flavin mononucleotide (FMN) to produce flavin adenine dinucleotide (FAD) coenzyme. The sequence is that of FAD synthase from Methanocaldococcus sp. (strain FS406-22).